The chain runs to 454 residues: tRNA modification GTPase MnmE (454 aa).

R23, E80, and K120 together coordinate (6S)-5-formyl-5,6,7,8-tetrahydrofolate. Residues 216 to 377 (GMKVVIAGRP…LRNHLKQSMG (162 aa)) form the TrmE-type G domain. N226 provides a ligand contact to K(+). Residues 226–231 (NAGKSS), 245–251 (TDIAGTT), 270–273 (DTAG), 335–338 (NKAD), and 358–360 (SAR) contribute to the GTP site. Residue S230 coordinates Mg(2+). Positions 245, 247, and 250 each coordinate K(+). T251 contributes to the Mg(2+) binding site. K454 lines the (6S)-5-formyl-5,6,7,8-tetrahydrofolate pocket.

Belongs to the TRAFAC class TrmE-Era-EngA-EngB-Septin-like GTPase superfamily. TrmE GTPase family. In terms of assembly, homodimer. Heterotetramer of two MnmE and two MnmG subunits. K(+) is required as a cofactor.

It localises to the cytoplasm. Its function is as follows. Exhibits a very high intrinsic GTPase hydrolysis rate. Involved in the addition of a carboxymethylaminomethyl (cmnm) group at the wobble position (U34) of certain tRNAs, forming tRNA-cmnm(5)s(2)U34. The sequence is that of tRNA modification GTPase MnmE from Escherichia coli O7:K1 (strain IAI39 / ExPEC).